The following is a 347-amino-acid chain: Inosamine-phosphate amidinotransferase 1 (347 aa).

Active-site residues include aspartate 179 and histidine 227. Cysteine 332 serves as the catalytic Amidino-cysteine intermediate.

The protein belongs to the amidinotransferase family. As to quaternary structure, homodimer.

The catalysed reaction is 1-amino-1-deoxy-scyllo-inositol 4-phosphate + L-arginine = 1-guanidino-1-deoxy-scyllo-inositol 4-phosphate + L-ornithine. It functions in the pathway antibiotic biosynthesis; streptomycin biosynthesis. Its function is as follows. Catalyzes two non-consecutive transamidination reactions. It converts scyllo-inosamine 4-phosphate into N-amidino-scyllo-inosamine 4-phosphate and N1-amidinostreptamine 6-phosphate into streptidine 6-phosphate. This chain is Inosamine-phosphate amidinotransferase 1 (strB1), found in Streptomyces griseus.